The primary structure comprises 248 residues: Cytochrome c oxidase subunit 2 (248 aa).

Positions 1–12 are cleaved as a signal peptide; it reads MLLMNLFTIINN. Topologically, residues 13-39 are mitochondrial intermembrane; sequence DVPTPYNMYFQDSTTPHQEGILELHDN. Residues 40-61 form a helical membrane-spanning segment; sequence IMFYMLTVLGLVSWMMIIIIKD. Residues 62-79 lie on the Mitochondrial matrix side of the membrane; sequence YKNNPITYKYIKHGQMIE. A helical membrane pass occupies residues 80–104; the sequence is IIWTILPAIILLMIAFPSFILLYLC. Topologically, residues 105–248 are mitochondrial intermembrane; the sequence is DEVISPAMTI…PTFLTWLNEQ (144 aa). Residues H183, C218, E220, C222, H226, and M229 each contribute to the Cu cation site. E220 provides a ligand contact to Mg(2+).

It belongs to the cytochrome c oxidase subunit 2 family. As to quaternary structure, component of the cytochrome c oxidase (complex IV, CIV), a multisubunit enzyme composed of a catalytic core of 3 subunits and several supernumerary subunits. The complex exists as a monomer or a dimer and forms supercomplexes (SCs) in the inner mitochondrial membrane with ubiquinol-cytochrome c oxidoreductase (cytochrome b-c1 complex, complex III, CIII). Requires Cu cation as cofactor. In terms of processing, the signal sequence of COX2 is processed by IMP1.

It localises to the mitochondrion inner membrane. The enzyme catalyses 4 Fe(II)-[cytochrome c] + O2 + 8 H(+)(in) = 4 Fe(III)-[cytochrome c] + 2 H2O + 4 H(+)(out). Functionally, component of the cytochrome c oxidase, the last enzyme in the mitochondrial electron transport chain which drives oxidative phosphorylation. The respiratory chain contains 3 multisubunit complexes succinate dehydrogenase (complex II, CII), ubiquinol-cytochrome c oxidoreductase (cytochrome b-c1 complex, complex III, CIII) and cytochrome c oxidase (complex IV, CIV), that cooperate to transfer electrons derived from NADH and succinate to molecular oxygen, creating an electrochemical gradient over the inner membrane that drives transmembrane transport and the ATP synthase. Cytochrome c oxidase is the component of the respiratory chain that catalyzes the reduction of oxygen to water. Electrons originating from reduced cytochrome c in the intermembrane space (IMS) are transferred via the dinuclear copper A center (CU(A)) of subunit 2 and heme A of subunit 1 to the active site in subunit 1, a binuclear center (BNC) formed by heme A3 and copper B (CU(B)). The BNC reduces molecular oxygen to 2 water molecules using 4 electrons from cytochrome c in the IMS and 4 protons from the mitochondrial matrix. The polypeptide is Cytochrome c oxidase subunit 2 (COX2) (Eremothecium gossypii (strain ATCC 10895 / CBS 109.51 / FGSC 9923 / NRRL Y-1056) (Yeast)).